The chain runs to 448 residues: Deoxyguanosinetriphosphate triphosphohydrolase-like protein (448 aa).

A disordered region spans residues 1-26 (MQINSSWQERFLADPPREKDHRPPFR). The span at 11-26 (FLADPPREKDHRPPFR) shows a compositional bias: basic and acidic residues. In terms of domain architecture, HD spans 59-272 (RLTHSLEVAQ…MELADDIAYA (214 aa)).

This sequence belongs to the dGTPase family. Type 2 subfamily.

The chain is Deoxyguanosinetriphosphate triphosphohydrolase-like protein from Histophilus somni (strain 129Pt) (Haemophilus somnus).